The sequence spans 288 residues: uncharacterized protein (288 aa).

In terms of domain architecture, HTH rpiR-type spans 5–81 (GNVLNKIGSL…LELSIELATK (77 aa)). The H-T-H motif DNA-binding region spans 41 to 60 (LSEIAKHLQVGEATLVRFCR). Residues 129–269 (VVKVLKKARR…YALLVQGEED (141 aa)) enclose the SIS domain.

This is an uncharacterized protein from Haemophilus influenzae (strain ATCC 51907 / DSM 11121 / KW20 / Rd).